The following is a 127-amino-acid chain: MVQGPTTHRNLDDSPAGPLLILSPCAGTPTRVPAAPDAPDFRLPCHFGRPTRKRGPSTPPLSSPGKVCATGPRRVYSVTVCCGHCGKDLTFAVKTGSTTLLGFEHLLNSDLDLLCPRCESRERHGKR.

The interval 2 to 56 (VQGPTTHRNLDDSPAGPLLILSPCAGTPTRVPAAPDAPDFRLPCHFGRPTRKRGP) is E7 terminal domain. Residues 33–66 (PAAPDAPDFRLPCHFGRPTRKRGPSTPPLSSPGK) are disordered. The segment at 82 to 118 (CGHCGKDLTFAVKTGSTTLLGFEHLLNSDLDLLCPRC) is a zinc-finger region. Positions 100–108 (LLGFEHLLN) match the Nuclear export signal motif.

It belongs to the papillomaviridae E7 protein family. In terms of assembly, homodimer. Homooligomer. Interacts with host RB1; this interaction induces dissociation of RB1-E2F1 complex thereby disrupting RB1 activity. Interacts with host EP300; this interaction represses EP300 transcriptional activity. Interacts with protein E2; this interaction inhibits E7 oncogenic activity. Interacts with host TMEM173/STING; this interaction impairs the ability of TMEM173/STING to sense cytosolic DNA and promote the production of type I interferon (IFN-alpha and IFN-beta). Highly phosphorylated.

It localises to the host cytoplasm. It is found in the host nucleus. Its function is as follows. Plays a role in viral genome replication by driving entry of quiescent cells into the cell cycle. Stimulation of progression from G1 to S phase allows the virus to efficiently use the cellular DNA replicating machinery to achieve viral genome replication. E7 protein has both transforming and trans-activating activities. Induces the disassembly of the E2F1 transcription factor from RB1, with subsequent transcriptional activation of E2F1-regulated S-phase genes. Interferes with host histone deacetylation mediated by HDAC1 and HDAC2, leading to transcription activation. Also plays a role in the inhibition of both antiviral and antiproliferative functions of host interferon alpha. Interaction with host TMEM173/STING impairs the ability of TMEM173/STING to sense cytosolic DNA and promote the production of type I interferon (IFN-alpha and IFN-beta). This Bos taurus (Bovine) protein is Protein E7.